The sequence spans 361 residues: Septin-1 (361 aa).

Residues 32–304 (KGFEFTLMVV…ENYRSDRLAK (273 aa)) enclose the Septin-type G domain. The G1 motif stretch occupies residues 42–49 (GESGLGKS). Residues 42–49 (GESGLGKS), threonine 76, glycine 102, 181–189 (KADCLTKKE), glycine 239, and arginine 254 each bind GTP. The tract at residues 99-102 (DTPG) is G3 motif. The segment at 180–183 (AKAD) is G4 motif. The residue at position 319 (serine 319) is a Phosphoserine.

It belongs to the TRAFAC class TrmE-Era-EngA-EngB-Septin-like GTPase superfamily. Septin GTPase family. As to quaternary structure, likely part of a multicomponent septin complex that includes pnut. Interacts with pnut. Interacts with park. Post-translationally, ubiquitinated by park, leading to its degradation by the proteasome. Accumulates at the leading edge of the cleavage furrow in dividing cells and cellularizing embryos (at protein level). Also accumulates at the leading edge of the embryo epithelium during dorsal closure, in the embryonic neurons, and at the baso-lateral surfaces of ovarian follicle cells (at protein level).

It is found in the cytoplasm. In terms of biological role, involved in cytokinesis. May be involved in p53-dependent apoptosis. This Drosophila melanogaster (Fruit fly) protein is Septin-1.